Reading from the N-terminus, the 443-residue chain is 23S rRNA (uracil(1939)-C(5))-methyltransferase RlmD (443 aa).

Positions Arg-10–Arg-68 constitute a TRAM domain. [4Fe-4S] cluster is bound by residues Cys-81, Cys-87, Cys-90, and Cys-168. 6 residues coordinate S-adenosyl-L-methionine: Gln-271, Phe-300, Asn-305, Glu-321, Asn-348, and Asp-369. Residue Cys-395 is the Nucleophile of the active site.

It belongs to the class I-like SAM-binding methyltransferase superfamily. RNA M5U methyltransferase family. RlmD subfamily.

The enzyme catalyses uridine(1939) in 23S rRNA + S-adenosyl-L-methionine = 5-methyluridine(1939) in 23S rRNA + S-adenosyl-L-homocysteine + H(+). In terms of biological role, catalyzes the formation of 5-methyl-uridine at position 1939 (m5U1939) in 23S rRNA. In Yersinia enterocolitica serotype O:8 / biotype 1B (strain NCTC 13174 / 8081), this protein is 23S rRNA (uracil(1939)-C(5))-methyltransferase RlmD.